A 358-amino-acid chain; its full sequence is Alanine racemase (358 aa).

The active-site Proton acceptor; specific for D-alanine is K34. K34 is subject to N6-(pyridoxal phosphate)lysine. Position 129 (R129) interacts with substrate. Catalysis depends on Y254, which acts as the Proton acceptor; specific for L-alanine. M302 serves as a coordination point for substrate.

Belongs to the alanine racemase family. The cofactor is pyridoxal 5'-phosphate.

The enzyme catalyses L-alanine = D-alanine. It functions in the pathway amino-acid biosynthesis; D-alanine biosynthesis; D-alanine from L-alanine: step 1/1. Its function is as follows. Catalyzes the interconversion of L-alanine and D-alanine. May also act on other amino acids. The protein is Alanine racemase (alr) of Vibrio vulnificus (strain CMCP6).